A 485-amino-acid chain; its full sequence is Adenosylhomocysteinase (485 aa).

Substrate contacts are provided by Thr64, Asp139, and Glu205. 206-208 (TTT) is a binding site for NAD(+). Substrate-binding residues include Lys235 and Asp239. NAD(+) contacts are provided by residues Asn240, 269 to 274 (GYGDVG), Glu292, Asn327, 348 to 350 (IGH), and Asn397.

It belongs to the adenosylhomocysteinase family. As to quaternary structure, homotetramer. It depends on NAD(+) as a cofactor. In terms of tissue distribution, mainly in floral buds and stems.

The catalysed reaction is S-adenosyl-L-homocysteine + H2O = L-homocysteine + adenosine. Its pathway is amino-acid biosynthesis; L-homocysteine biosynthesis; L-homocysteine from S-adenosyl-L-homocysteine: step 1/1. Its function is as follows. Adenosylhomocysteine is a competitive inhibitor of S-adenosyl-L-methionine-dependent methyl transferase reactions; therefore adenosylhomocysteinase may play a key role in the control of methylations via regulation of the intracellular concentration of adenosylhomocysteine. In Petroselinum crispum (Parsley), this protein is Adenosylhomocysteinase (SAHH).